Consider the following 182-residue polypeptide: Transcription termination/antitermination protein NusG (182 aa).

Residues 131 to 163 (VGEQVRIQSGPFANQIGEVQEIEADKFKLTVLV) form the KOW domain.

The protein belongs to the NusG family.

Functionally, participates in transcription elongation, termination and antitermination. The polypeptide is Transcription termination/antitermination protein NusG (Staphylococcus epidermidis (strain ATCC 35984 / DSM 28319 / BCRC 17069 / CCUG 31568 / BM 3577 / RP62A)).